Consider the following 894-residue polypeptide: MTTIPFCFLFVAFFFSSSTADQRHHSRHLLHQPFFPVVTAAPPPYQPPVSSQPPSPSPHTHHHHKKHLTTTTPPPHEKHLFSSVANPPPPPPSPPHPNPFFPSSDPTSTASHPPPAPPPPASLPTFPANISSLLFPTHNKQSKPPSNGHIARLVTITASVISAAALLSLFAVFIIFIRRTRHRRRSSPADDTKSTRSDALQLFNASPSDGSKKQKQHQQPPKYTSSHTSSEFLYLGTLVNSRSNGLEQQKSPISLSGGITGVLELPPPASSSSSSSYSQYHKLGSPELRPLPPLPKLQSFTPVYKSTEQLNPKRQDFDGDDNENDEFFSPRGSSGRKQSPTRVSDVDQIDNRSINGSGSNSCSPTNFAPSLNASPGTSLKPKSISPPVSLHSQISSNNGIPKRLCPARPPPPPPPPPQVSEVPATMSHSLPGDDSDPEKKVETMKPKLKTLHWDKVRASSSRVMVWDQIKSNSFQVNEEMIETLFKVNDPTSRTRDGVVQSVSQENRFLDPRKSHNIAILLRALNVTADEVCEALIEGNSDTLGPELLECLLKMAPTKEEEDKLKELKDDDDGSPSKIGPAEKFLKALLNIPFAFKRIDAMLYIVKFESEIEYLNRSFDTLEAATGELKNTRMFLKLLEAVLKTGNRMNIGTNRGDAHAFKLDTLLKLVDIKGADGKTTLLHFVVQEIIKFEGARVPFTPSQSHIGDNMAEQSAFQDDLELKKLGLQVVSGLSSQLINVKKAAAMDSNSLINETAEIARGIAKVKEVITELKQETGVERFLESMNSFLNKGEKEITELQSHGDNVMKMVKEVTEYFHGNSETHPFRIFAVVRDFLTILDQVCKEVGRVNERTVYGSMPLHSPSNQTATPLFPVVINNNSRLSPSGSLDDDDGSF.

Positions 1–20 are cleaved as a signal peptide; the sequence is MTTIPFCFLFVAFFFSSSTA. Residues 41–57 show a composition bias toward pro residues; that stretch reads APPPYQPPVSSQPPSPS. Residues 41-129 are disordered; it reads APPPYQPPVS…PASLPTFPAN (89 aa). Positions 59-68 are enriched in basic residues; it reads HTHHHHKKHL. The span at 86–100 shows a compositional bias: pro residues; the sequence is NPPPPPPSPPHPNPF. A compositionally biased stretch (low complexity) spans 101 to 111; sequence FPSSDPTSTAS. Positions 112–122 are enriched in pro residues; sequence HPPPAPPPPAS. The chain crosses the membrane as a helical span at residues 156 to 176; it reads ITASVISAAALLSLFAVFIIF. Disordered regions lie at residues 203–228 and 264–440; these read FNAS…SSHT and ELPP…PEKK. The segment covering 270 to 288 has biased composition (low complexity); sequence SSSSSSSYSQYHKLGSPEL. Composition is skewed to polar residues over residues 298–310, 331–342, 351–377, and 390–399; these read QSFT…TEQL, RGSSGRKQSPTR, NRSI…SPGT, and LHSQISSNNG. Residues 407-418 show a composition bias toward pro residues; it reads ARPPPPPPPPPQ. The region spanning 438-864 is the FH2 domain; the sequence is EKKVETMKPK…GSMPLHSPSN (427 aa).

The protein belongs to the formin-like family. Class-I subfamily.

Its subcellular location is the membrane. Functionally, might be involved in the organization and polarity of the actin cytoskeleton. This is Formin-like protein 2 (FH2) from Arabidopsis thaliana (Mouse-ear cress).